A 56-amino-acid chain; its full sequence is Photosystem II reaction center protein K (56 aa).

Positions 1–19 are excised as a propeptide; the sequence is MLNFLLQNTFVLWSNFILC. Residues 35–55 form a helical membrane-spanning segment; that stretch reads MPVIPVFFFLLAFVWQAAVSF.

The protein belongs to the PsbK family. PSII is composed of 1 copy each of membrane proteins PsbA, PsbB, PsbC, PsbD, PsbE, PsbF, PsbH, PsbI, PsbJ, PsbK, PsbL, PsbM, PsbT, PsbX, PsbY, PsbZ, Psb30/Ycf12, at least 3 peripheral proteins of the oxygen-evolving complex and a large number of cofactors. It forms dimeric complexes.

It localises to the plastid. The protein localises to the chloroplast thylakoid membrane. One of the components of the core complex of photosystem II (PSII). PSII is a light-driven water:plastoquinone oxidoreductase that uses light energy to abstract electrons from H(2)O, generating O(2) and a proton gradient subsequently used for ATP formation. It consists of a core antenna complex that captures photons, and an electron transfer chain that converts photonic excitation into a charge separation. In Welwitschia mirabilis (Tree tumbo), this protein is Photosystem II reaction center protein K.